The sequence spans 287 residues: Stomatin-like protein 3 (287 aa).

Position 3 is a phosphoserine (Ser-3). Residues 25 to 45 traverse the membrane as a helical; Signal-anchor for type III membrane protein segment; sequence WILFFLSFLLMLVTFPISVWM. The Cytoplasmic segment spans residues 46–287; sequence CLKIIKEYER…GNNKKVTAKA (242 aa). Ser-237 is subject to Phosphoserine.

It belongs to the band 7/mec-2 family. Homodimer. Interacts with PIEZO1 and PIEZO2. Expressed by all dorsal root ganglion neurons and is selectively expressed in neuronal tissues. Detected in olfactory epithelium.

The protein localises to the cell membrane. Functionally, required for the function of many mechanoreceptors. Modulate mechanotransduction channels and acid-sensing ion channels (ASIC) proteins. Potentiates PIEZO1 and PIEZO2 function by increasing their sensitivity to mechanical stimulations. The polypeptide is Stomatin-like protein 3 (Stoml3) (Mus musculus (Mouse)).